The chain runs to 185 residues: Homeobox protein TGIF2LY (185 aa).

Disordered stretches follow at residues 1-58 (MEAA…GNLP) and 166-185 (RCQE…SSPE). The span at 21-39 (AKTQSPAQDTSIMSRNNAD) shows a compositional bias: polar residues. The homeobox; TALE-type DNA-binding region spans 48-111 (EHKKKRKGNL…INARRRILPD (64 aa)).

Belongs to the TALE/TGIF homeobox family. In terms of tissue distribution, specifically expressed in adult testis.

The protein resides in the nucleus. May have a transcription role in testis. May act as a competitor/regulator of TGIF2LX. In Homo sapiens (Human), this protein is Homeobox protein TGIF2LY (TGIF2LY).